The following is a 278-amino-acid chain: Keratin-associated protein 5-1 (278 aa).

A run of 8 repeats spans residues 42–45 (CCVP), 48–51 (CCKP), 130–133 (CCVP), 136–139 (CCKP), 142–145 (CCVP), 239–242 (CCKP), 258–261 (CCKP), and 268–271 (CCVP). The 8 X 4 AA repeats of C-C-X-P stretch occupies residues 42–271 (CCVPVCCCKP…CCSQSSCCVP (230 aa)).

Belongs to the KRTAP type 5 family. In terms of assembly, interacts with hair keratins. As to expression, expressed in hair root but not in skin. Expressed also in lung, pancreas, ovary, testis.

In the hair cortex, hair keratin intermediate filaments are embedded in an interfilamentous matrix, consisting of hair keratin-associated protein (KRTAP), which are essential for the formation of a rigid and resistant hair shaft through their extensive disulfide bond cross-linking with abundant cysteine residues of hair keratins. The matrix proteins include the high-sulfur and high-glycine-tyrosine keratins. The protein is Keratin-associated protein 5-1 (KRTAP5-1) of Homo sapiens (Human).